The sequence spans 304 residues: Oxygen-dependent coproporphyrinogen-III oxidase (304 aa).

Ser94 serves as a coordination point for substrate. Residues His98 and His108 each coordinate a divalent metal cation. Catalysis depends on His108, which acts as the Proton donor. 110–112 (NVR) lines the substrate pocket. The a divalent metal cation site is built by His147 and His177. The tract at residues 242–277 (YVEFNLVWDRGTLFGLQSGGRTESVLMSMPPLARWQ) is important for dimerization. Position 260-262 (260-262 (GGR)) interacts with substrate.

The protein belongs to the aerobic coproporphyrinogen-III oxidase family. Homodimer. Requires a divalent metal cation as cofactor.

The protein localises to the cytoplasm. It catalyses the reaction coproporphyrinogen III + O2 + 2 H(+) = protoporphyrinogen IX + 2 CO2 + 2 H2O. The protein operates within porphyrin-containing compound metabolism; protoporphyrin-IX biosynthesis; protoporphyrinogen-IX from coproporphyrinogen-III (O2 route): step 1/1. In terms of biological role, involved in the heme biosynthesis. Catalyzes the aerobic oxidative decarboxylation of propionate groups of rings A and B of coproporphyrinogen-III to yield the vinyl groups in protoporphyrinogen-IX. The sequence is that of Oxygen-dependent coproporphyrinogen-III oxidase from Sodalis glossinidius (strain morsitans).